A 348-amino-acid polypeptide reads, in one-letter code: Isopentenyl-diphosphate delta-isomerase (348 aa).

9 to 10 (RK) is a binding site for substrate. FMN contacts are provided by residues 68–70 (AMT), S98, and N127. Q157 is a substrate binding site. Residue E158 coordinates Mg(2+). FMN contacts are provided by residues K188, S213, T218, and 286-287 (AG).

It belongs to the IPP isomerase type 2 family. Homooctamer. Dimer of tetramers. Requires FMN as cofactor. NADPH is required as a cofactor. Mg(2+) serves as cofactor.

It localises to the cytoplasm. The catalysed reaction is isopentenyl diphosphate = dimethylallyl diphosphate. In terms of biological role, involved in the biosynthesis of isoprenoids. Catalyzes the 1,3-allylic rearrangement of the homoallylic substrate isopentenyl (IPP) to its allylic isomer, dimethylallyl diphosphate (DMAPP). The protein is Isopentenyl-diphosphate delta-isomerase of Limosilactobacillus reuteri (strain DSM 20016) (Lactobacillus reuteri).